The following is a 510-amino-acid chain: NAD(P)H-quinone oxidoreductase subunit 2, chloroplastic (510 aa).

12 consecutive transmembrane segments (helical) span residues 24–44 (LLLF…GLIL), 59–79 (WFYF…FFRW), 99–119 (IFQF…VEYI), 124–144 (MAIT…MFLC), 149–169 (LITI…LSGY), 184–204 (LLMG…LYGL), 229–249 (ISIA…PAPF), 295–315 (WHLL…LIAL), 323–343 (MLAY…IVGD), 354–374 (YMLF…SFGL), 395–415 (ALSS…AGFF), and 418–438 (LYLF…IGLL).

It belongs to the complex I subunit 2 family. In terms of assembly, NDH is composed of at least 16 different subunits, 5 of which are encoded in the nucleus.

It localises to the plastid. The protein resides in the chloroplast thylakoid membrane. The enzyme catalyses a plastoquinone + NADH + (n+1) H(+)(in) = a plastoquinol + NAD(+) + n H(+)(out). The catalysed reaction is a plastoquinone + NADPH + (n+1) H(+)(in) = a plastoquinol + NADP(+) + n H(+)(out). NDH shuttles electrons from NAD(P)H:plastoquinone, via FMN and iron-sulfur (Fe-S) centers, to quinones in the photosynthetic chain and possibly in a chloroplast respiratory chain. The immediate electron acceptor for the enzyme in this species is believed to be plastoquinone. Couples the redox reaction to proton translocation, and thus conserves the redox energy in a proton gradient. The polypeptide is NAD(P)H-quinone oxidoreductase subunit 2, chloroplastic (Coelogyne cristata (Orchid)).